The sequence spans 193 residues: Xanthine phosphoribosyltransferase (193 aa).

Xanthine contacts are provided by Leu20 and Thr27. 128–132 provides a ligand contact to 5-phospho-alpha-D-ribose 1-diphosphate; it reads ANGQA. Lys156 contributes to the xanthine binding site.

It belongs to the purine/pyrimidine phosphoribosyltransferase family. Xpt subfamily. Homodimer.

The protein resides in the cytoplasm. The enzyme catalyses XMP + diphosphate = xanthine + 5-phospho-alpha-D-ribose 1-diphosphate. Its pathway is purine metabolism; XMP biosynthesis via salvage pathway; XMP from xanthine: step 1/1. Converts the preformed base xanthine, a product of nucleic acid breakdown, to xanthosine 5'-monophosphate (XMP), so it can be reused for RNA or DNA synthesis. This chain is Xanthine phosphoribosyltransferase, found in Streptococcus pneumoniae (strain P1031).